The sequence spans 406 residues: Elongation factor Tu, chloroplastic (406 aa).

One can recognise a tr-type G domain in the interval 8-210; it reads KTHINIATIG…LLDSYIPKPK (203 aa). GTP is bound by residues 17–24, 77–81, and 132–135; these read GHFNHGKT, DCPGH, and NKED. T24 is a Mg(2+) binding site.

The protein belongs to the TRAFAC class translation factor GTPase superfamily. Classic translation factor GTPase family. EF-Tu/EF-1A subfamily. Monomer.

It localises to the plastid. The protein resides in the chloroplast. The catalysed reaction is GTP + H2O = GDP + phosphate + H(+). Functionally, GTP hydrolase that promotes the GTP-dependent binding of aminoacyl-tRNA to the A-site of ribosomes during protein biosynthesis. This is Elongation factor Tu, chloroplastic (tufA) from Chaetosphaeridium globosum (Charophycean green alga).